Here is a 51-residue protein sequence, read N- to C-terminus: Large ribosomal subunit protein eL39 (51 aa).

It belongs to the eukaryotic ribosomal protein eL39 family. In terms of assembly, interacts with IMPACT.

This chain is Large ribosomal subunit protein eL39 (RPL39), found in Gallus gallus (Chicken).